Consider the following 515-residue polypeptide: Bifunctional purine biosynthesis protein PurH (515 aa).

One can recognise an MGS-like domain in the interval 1-145 (MTKRVLISVS…KNHASVTVVV (145 aa)).

It belongs to the PurH family.

It catalyses the reaction (6R)-10-formyltetrahydrofolate + 5-amino-1-(5-phospho-beta-D-ribosyl)imidazole-4-carboxamide = 5-formamido-1-(5-phospho-D-ribosyl)imidazole-4-carboxamide + (6S)-5,6,7,8-tetrahydrofolate. The enzyme catalyses IMP + H2O = 5-formamido-1-(5-phospho-D-ribosyl)imidazole-4-carboxamide. Its pathway is purine metabolism; IMP biosynthesis via de novo pathway; 5-formamido-1-(5-phospho-D-ribosyl)imidazole-4-carboxamide from 5-amino-1-(5-phospho-D-ribosyl)imidazole-4-carboxamide (10-formyl THF route): step 1/1. The protein operates within purine metabolism; IMP biosynthesis via de novo pathway; IMP from 5-formamido-1-(5-phospho-D-ribosyl)imidazole-4-carboxamide: step 1/1. This is Bifunctional purine biosynthesis protein PurH from Streptococcus pneumoniae (strain JJA).